The chain runs to 458 residues: Argininosuccinate lyase (458 aa).

Belongs to the lyase 1 family. Argininosuccinate lyase subfamily.

It is found in the cytoplasm. The catalysed reaction is 2-(N(omega)-L-arginino)succinate = fumarate + L-arginine. Its pathway is amino-acid biosynthesis; L-arginine biosynthesis; L-arginine from L-ornithine and carbamoyl phosphate: step 3/3. The protein is Argininosuccinate lyase of Pseudoalteromonas atlantica (strain T6c / ATCC BAA-1087).